A 172-amino-acid chain; its full sequence is Adenine phosphoribosyltransferase (172 aa).

The protein belongs to the purine/pyrimidine phosphoribosyltransferase family. As to quaternary structure, homodimer.

Its subcellular location is the cytoplasm. The enzyme catalyses AMP + diphosphate = 5-phospho-alpha-D-ribose 1-diphosphate + adenine. The protein operates within purine metabolism; AMP biosynthesis via salvage pathway; AMP from adenine: step 1/1. In terms of biological role, catalyzes a salvage reaction resulting in the formation of AMP, that is energically less costly than de novo synthesis. This chain is Adenine phosphoribosyltransferase, found in Malacoplasma penetrans (strain HF-2) (Mycoplasma penetrans).